Here is a 295-residue protein sequence, read N- to C-terminus: 4-hydroxy-tetrahydrodipicolinate synthase (295 aa).

Thr46 contributes to the pyruvate binding site. Tyr134 serves as the catalytic Proton donor/acceptor. Lys162 serves as the catalytic Schiff-base intermediate with substrate. Ile205 is a binding site for pyruvate.

This sequence belongs to the DapA family. As to quaternary structure, homotetramer; dimer of dimers.

The protein localises to the cytoplasm. It catalyses the reaction L-aspartate 4-semialdehyde + pyruvate = (2S,4S)-4-hydroxy-2,3,4,5-tetrahydrodipicolinate + H2O + H(+). Its pathway is amino-acid biosynthesis; L-lysine biosynthesis via DAP pathway; (S)-tetrahydrodipicolinate from L-aspartate: step 3/4. Functionally, catalyzes the condensation of (S)-aspartate-beta-semialdehyde [(S)-ASA] and pyruvate to 4-hydroxy-tetrahydrodipicolinate (HTPA). This is 4-hydroxy-tetrahydrodipicolinate synthase from Anaeromyxobacter sp. (strain K).